The sequence spans 232 residues: Mediator of RNA polymerase II transcription subunit 18 (232 aa).

Belongs to the Mediator complex subunit 18 family. Component of the Mediator complex.

It localises to the nucleus. In terms of biological role, component of the Mediator complex, a coactivator involved in the regulated transcription of nearly all RNA polymerase II-dependent genes. Mediator functions as a bridge to convey information from gene-specific regulatory proteins to the basal RNA polymerase II transcription machinery. Mediator is recruited to promoters by direct interactions with regulatory proteins and serves as a scaffold for the assembly of a functional preinitiation complex with RNA polymerase II and the general transcription factors. This Caenorhabditis elegans protein is Mediator of RNA polymerase II transcription subunit 18 (mdt-18).